Here is an 818-residue protein sequence, read N- to C-terminus: Actin filament-associated protein 1-like 2 (818 aa).

Residue tyrosine 56 is modified to Phosphotyrosine. Residues 66-163 are disordered; sequence QNAESQGKAP…SKGKSAPYQW (98 aa). The segment covering 85–94 has biased composition (polar residues); it reads EPSQHSSAPQ. A compositionally biased stretch (acidic residues) spans 123–139; the sequence is YYEEAEPYDTSLNEDGE. 2 PH domains span residues 175 to 271 and 353 to 447; these read DARI…EVSG and SLET…SESG. Serine 408 is subject to Phosphoserine. Tyrosine 413 bears the Phosphotyrosine mark. Serine 484 carries the post-translational modification Phosphoserine. Residues 513–532 form a disordered region; the sequence is AAVEPTEEATPVADDPNERE. Residues 652-749 are a coiled coil; that stretch reads AEIKLGKNRT…VKDNLKKAEA (98 aa). The segment at 765 to 787 is disordered; that stretch reads NVSPRPKAVTPASAPDCTPVNSA.

In terms of assembly, interacts with SRC. Interacts with LCK when tyrosine phosphorylated. Tyrosine phosphorylated (by SRC). As to expression, detected in spleen and thyroid, and at lower levels in kidney, brain, lung and pancreas.

It localises to the cytoplasm. In terms of biological role, may play a role in a signaling cascade by enhancing the kinase activity of SRC. Contributes to SRC-regulated transcription activation. The sequence is that of Actin filament-associated protein 1-like 2 (AFAP1L2) from Homo sapiens (Human).